The following is a 370-amino-acid chain: Ribosomal RNA small subunit methyltransferase H (370 aa).

Residues 85-87, aspartate 104, tyrosine 131, aspartate 152, and glutamine 159 each bind S-adenosyl-L-methionine; that span reads GGH. Composition is skewed to basic and acidic residues over residues 332–345 and 353–370; these read GAERATPEEIERNP and RALEKVAGRPTTARRDAR. The segment at 332-370 is disordered; the sequence is GAERATPEEIERNPRSAPVRLRALEKVAGRPTTARRDAR.

It belongs to the methyltransferase superfamily. RsmH family.

The protein localises to the cytoplasm. The enzyme catalyses cytidine(1402) in 16S rRNA + S-adenosyl-L-methionine = N(4)-methylcytidine(1402) in 16S rRNA + S-adenosyl-L-homocysteine + H(+). In terms of biological role, specifically methylates the N4 position of cytidine in position 1402 (C1402) of 16S rRNA. This chain is Ribosomal RNA small subunit methyltransferase H, found in Mycobacterium sp. (strain KMS).